Here is a 237-residue protein sequence, read N- to C-terminus: Urease accessory protein UreF (237 aa).

This sequence belongs to the UreF family. In terms of assembly, ureD, UreF and UreG form a complex that acts as a GTP-hydrolysis-dependent molecular chaperone, activating the urease apoprotein by helping to assemble the nickel containing metallocenter of UreC. The UreE protein probably delivers the nickel.

The protein localises to the cytoplasm. Functionally, required for maturation of urease via the functional incorporation of the urease nickel metallocenter. The protein is Urease accessory protein UreF of Streptococcus thermophilus (strain ATCC BAA-250 / LMG 18311).